We begin with the raw amino-acid sequence, 230 residues long: Endonuclease NucS (230 aa).

Belongs to the NucS endonuclease family.

The protein resides in the cytoplasm. In terms of biological role, cleaves both 3' and 5' ssDNA extremities of branched DNA structures. This Corynebacterium glutamicum (strain R) protein is Endonuclease NucS.